Consider the following 393-residue polypeptide: Phosphoglycerate kinase (393 aa).

Substrate-binding positions include 22 to 24 (DFN), arginine 37, 60 to 63 (HLGR), arginine 119, and arginine 152. Residues lysine 202, glycine 293, glutamate 324, and 350-353 (GGDS) contribute to the ATP site.

Belongs to the phosphoglycerate kinase family. As to quaternary structure, monomer.

Its subcellular location is the cytoplasm. It catalyses the reaction (2R)-3-phosphoglycerate + ATP = (2R)-3-phospho-glyceroyl phosphate + ADP. Its pathway is carbohydrate degradation; glycolysis; pyruvate from D-glyceraldehyde 3-phosphate: step 2/5. In Borreliella afzelii (strain PKo) (Borrelia afzelii), this protein is Phosphoglycerate kinase.